A 140-amino-acid polypeptide reads, in one-letter code: Required for drug-induced death protein 1 (140 aa).

The tract at residues 1–95 is disordered; it reads MTVGARLRSK…DKPKKRYRRK (95 aa). A compositionally biased stretch (acidic residues) spans 29–53; that stretch reads EETDAIVEHLEGEDEDPESQDCERE. Residues 118–140 traverse the membrane as a helical segment; the sequence is LQGFAAAYSAPFGVATSVVSFVR.

The protein resides in the membrane. In terms of biological role, regulates drug efflux through modulation of ABCB1 localization and activity. The polypeptide is Required for drug-induced death protein 1 (Rattus norvegicus (Rat)).